The chain runs to 157 residues: Protein Smg homolog (157 aa).

The protein belongs to the Smg family.

In Alkalilimnicola ehrlichii (strain ATCC BAA-1101 / DSM 17681 / MLHE-1), this protein is Protein Smg homolog.